Consider the following 282-residue polypeptide: Dihydroorotate dehydrogenase B (NAD(+)), electron transfer subunit homolog (282 aa).

The FAD-binding FR-type domain occupies 2 to 100; that stretch reads GGTALNEIVK…VGPLGNPSEI (99 aa). Residues Cys225, Cys228, and Cys240 each contribute to the [2Fe-2S] cluster site.

This sequence belongs to the PyrK family. Requires [2Fe-2S] cluster as cofactor. It depends on FAD as a cofactor.

This Thermotoga maritima (strain ATCC 43589 / DSM 3109 / JCM 10099 / NBRC 100826 / MSB8) protein is Dihydroorotate dehydrogenase B (NAD(+)), electron transfer subunit homolog.